The chain runs to 92 residues: Alpha-elapitoxin-As2a (92 aa).

Positions 1–21 (MKTLLLTLVVVTIVCLDLGDG) are cleaved as a signal peptide. 5 disulfide bridges follow: C24–C41, C34–C62, C47–C51, C66–C77, and C78–C83.

This sequence belongs to the three-finger toxin family. Long-chain subfamily. Type II alpha-neurotoxin sub-subfamily. As to expression, expressed by the venom gland.

Its subcellular location is the secreted. Its function is as follows. Binds with high affinity to muscular (alpha-1/CHRNA1) and neuronal (alpha-7/CHRNA7) nicotinic acetylcholine receptor (nAChR) and inhibits acetylcholine from binding to the receptor, thereby impairing neuromuscular and neuronal transmission. This chain is Alpha-elapitoxin-As2a, found in Austrelaps superbus (Lowland copperhead snake).